A 648-amino-acid polypeptide reads, in one-letter code: PAN2-PAN3 deadenylation complex subunit PAN3 (648 aa).

Positions 1 to 24 are disordered; the sequence is MAATRYPPNDLRRQVGSPRSKGRE. The C3H1-type zinc-finger motif lies at 24–53; sequence ENKDTLCRNILIYGNCRYEDQGCTFNHDQN. The tract at residues 244-506 is pseudokinase domain; it reads QVMPNSGLPQ…SIENFISGIA (263 aa). Residues arginine 295, 345 to 352, and 404 to 405 contribute to the ATP site; these read DYHPLSKT and SK. Positions 507-545 form a coiled coil; sequence THMTAFFDLALQDGDEKQFHLARELENGRIARSMMKLMT. The tract at residues 546 to 648 is knob domain; sequence IIERAEPGGA…SKTGAPGANN (103 aa).

Belongs to the protein kinase superfamily. PAN3 family. In terms of assembly, homodimer. Forms a heterotrimer with a catalytic subunit PAN2 to form the poly(A)-nuclease (PAN) deadenylation complex. Interacts (via PAM-2 motif) with poly(A)-binding protein PAB1 (via PABC domain), conferring substrate specificity of the enzyme complex.

It localises to the cytoplasm. Regulatory subunit of the poly(A)-nuclease (PAN) deadenylation complex, one of two cytoplasmic mRNA deadenylases involved in mRNA turnover. PAN specifically shortens poly(A) tails of RNA and the activity is stimulated by poly(A)-binding protein PAB1. PAN deadenylation is followed by rapid degradation of the shortened mRNA tails by the CCR4-NOT complex. Deadenylated mRNAs are then degraded by two alternative mechanisms, namely exosome-mediated 3'-5' exonucleolytic degradation, or deadenylation-dependent mRNA decaping and subsequent 5'-3' exonucleolytic degradation by XRN1. May also be involved in post-transcriptional maturation of mRNA poly(A) tails. PAN3 acts as a positive regulator for PAN activity, recruiting the catalytic subunit PAN2 to mRNA via its interaction with RNA and with PAB1. This is PAN2-PAN3 deadenylation complex subunit PAN3 from Chaetomium globosum (strain ATCC 6205 / CBS 148.51 / DSM 1962 / NBRC 6347 / NRRL 1970) (Soil fungus).